The following is a 62-amino-acid chain: Sperm protamine P1 (62 aa).

The tract at residues 1 to 62 (MARYRHSRSR…RYSRRRRRRY (62 aa)) is disordered.

It belongs to the protamine P1 family. In terms of tissue distribution, testis.

Its subcellular location is the nucleus. It localises to the chromosome. Protamines substitute for histones in the chromatin of sperm during the haploid phase of spermatogenesis. They compact sperm DNA into a highly condensed, stable and inactive complex. In Bettongia penicillata (Brush-tailed bettong), this protein is Sperm protamine P1 (PRM1).